Here is a 462-residue protein sequence, read N- to C-terminus: Histidine--tRNA ligase (462 aa).

It belongs to the class-II aminoacyl-tRNA synthetase family. In terms of assembly, homodimer.

Its subcellular location is the cytoplasm. It catalyses the reaction tRNA(His) + L-histidine + ATP = L-histidyl-tRNA(His) + AMP + diphosphate + H(+). This is Histidine--tRNA ligase (hisS) from Nostoc sp. (strain PCC 7120 / SAG 25.82 / UTEX 2576).